The following is a 164-amino-acid chain: Sorting nexin-3 (164 aa).

One can recognise a PX domain in the interval 40 to 163; sequence EIEVCNPKTH…VRFIQDPTFQ (124 aa). A 1,2-diacyl-sn-glycero-3-phospho-(1D-myo-inositol-3-phosphate)-binding residues include arginine 83, serine 85, lysine 114, arginine 120, and arginine 129.

The protein belongs to the sorting nexin family.

The protein localises to the cytoplasm. Its subcellular location is the golgi apparatus membrane. The protein resides in the prevacuolar compartment membrane. In terms of biological role, required for retention of late Golgi membrane proteins. Component of the retrieval machinery that functions by direct interaction with the cytosolic tails of certain TGN membrane proteins during the sorting/budding process at the prevacuolar compartment. Binds phosphatidylinositol 3-phosphate (PtdIns(P3)). This chain is Sorting nexin-3 (SNX3), found in Kluyveromyces lactis (strain ATCC 8585 / CBS 2359 / DSM 70799 / NBRC 1267 / NRRL Y-1140 / WM37) (Yeast).